The primary structure comprises 262 residues: LOB domain-containing protein 18 (262 aa).

An LOB domain is found at 36-138 (GPCGACKFLR…AEVSYLQAHL (103 aa)). Residues 223-262 (VGLGGENSHDLQALAHELLHRQGSPPPAATDHSPSRTMSR) form a disordered region.

This sequence belongs to the LOB domain-containing protein family. Homodimer and heterodimer with LBD16. Interacts with GIP1. Expressed in roots, stems, leaves and flowers. Expressed in vascular tissues of hypocotyls, leaves, roots, developing floral organs and siliques.

It localises to the nucleus. Functionally, involved in the positive regulation of tracheary element (TE) differentiation. Involved in a positive feedback loop that maintains or promotes NAC030/VND7 expression that regulates TE differentiation-related genes. Functions in the initiation and emergence of lateral roots, in conjunction with LBD16, downstream of ARF7 and ARF19. Transcriptional activator that directly regulates EXPA14, a gene encoding a cell wall-loosening factor that promotes lateral root emergence. Activates EXPA14 by directly binding to a specific region of its promoter. Transcriptional activator that directly regulates EXPA17, a gene encoding a cell wall-loosening factor that promotes lateral root emergence. Acts downstream of the auxin influx carriers AUX1 and LAX1 in the regulation of lateral root initiation and development. In Arabidopsis thaliana (Mouse-ear cress), this protein is LOB domain-containing protein 18 (LBD18).